A 1165-amino-acid chain; its full sequence is ATP-dependent helicase/deoxyribonuclease subunit B (1165 aa).

The region spanning 1-324 (MRFIIGGAGS…LVEAQNRREE (324 aa)) is the UvrD-like helicase ATP-binding domain. An ATP-binding site is contributed by 6 to 13 (GGAGSGKS). The UvrD-like helicase C-terminal domain occupies 282–597 (PLRFRGAPEL…IVGTVERSRH (316 aa)). [4Fe-4S] cluster contacts are provided by Cys803, Cys1121, Cys1124, and Cys1130.

It belongs to the helicase family. AddB/RexB type 1 subfamily. Heterodimer of AddA and AddB. Requires Mg(2+) as cofactor. It depends on [4Fe-4S] cluster as a cofactor.

Functionally, the heterodimer acts as both an ATP-dependent DNA helicase and an ATP-dependent, dual-direction single-stranded exonuclease. Recognizes the chi site generating a DNA molecule suitable for the initiation of homologous recombination. The AddB subunit has 5' -&gt; 3' nuclease activity but not helicase activity. This chain is ATP-dependent helicase/deoxyribonuclease subunit B, found in Symbiobacterium thermophilum (strain DSM 24528 / JCM 14929 / IAM 14863 / T).